A 234-amino-acid polypeptide reads, in one-letter code: Triosephosphate isomerase (234 aa).

8 to 10 serves as a coordination point for substrate; it reads NFK. The Electrophile role is filled by His90. The active-site Proton acceptor is the Glu159. The substrate site is built by Gly165 and Ser197.

The protein belongs to the triosephosphate isomerase family. Homodimer.

It is found in the cytoplasm. It carries out the reaction D-glyceraldehyde 3-phosphate = dihydroxyacetone phosphate. The protein operates within carbohydrate biosynthesis; gluconeogenesis. Its pathway is carbohydrate degradation; glycolysis; D-glyceraldehyde 3-phosphate from glycerone phosphate: step 1/1. Involved in the gluconeogenesis. Catalyzes stereospecifically the conversion of dihydroxyacetone phosphate (DHAP) to D-glyceraldehyde-3-phosphate (G3P). The sequence is that of Triosephosphate isomerase from Helicobacter pylori (strain G27).